Here is a 137-residue protein sequence, read N- to C-terminus: GEL complex subunit OPTI (137 aa).

At 1–44 (MSGGRRKEEPPQPQLANGALKVSVWSKVLRSDAAWEDKDEFLDV) the chain is on the cytoplasmic side. The chain crosses the membrane as a helical span at residues 45-65 (IYWFRQIIAVVLGVIWGVLPL). R66 is a topological domain (lumenal). The helical transmembrane segment at 67-84 (GFLGIAGFCLINAGVLYL) threads the bilayer. The Cytoplasmic portion of the chain corresponds to 85–103 (YFSNYLQIDEEEYGGTWEL). Residues 104–127 (TKEGFMTSFALFMVCVADSFTTGH) form a helical membrane-spanning segment. Over 128 to 137 (LDHLLHCHPL) the chain is Lumenal.

Belongs to the EMC6 family. As to quaternary structure, component of the GET- and EMC-like (GEL) complex, composed of RAB5IF/OPTI and TMCO1. The GEL complex is part of the multi-pass translocon (MPT) complex, composed of three subcomplexes, the GEL complex (composed of RAB5IF/OPTI and TMCO1), the BOS complex (composed of NCLN/Nicalin, NOMO and TMEM147) and the PAT complex (composed of WDR83OS/Asterix and CCDC47). The MPT complex associates with the SEC61 complex. Interacts with NDUFS3, NDUFA4, NDUFV1, NDUFA9 and NDUFS8 of the mitochondrial membrane respiratory chain NADH dehydrogenase (Complex I). Interacts with UQCRC2 of the ubiquinol-cytochrome c reductase complex (Complex III). Interacts with COX5A and COX7C of the cytochrome c oxidase complex (Complex IV). In terms of tissue distribution, expressed in embryonic stem cells and differentiated neuronal cells.

Its subcellular location is the endoplasmic reticulum membrane. It is found in the mitochondrion inner membrane. Functionally, component of the multi-pass translocon (MPT) complex that mediates insertion of multi-pass membrane proteins into the lipid bilayer of membranes. The MPT complex takes over after the SEC61 complex: following membrane insertion of the first few transmembrane segments of proteins by the SEC61 complex, the MPT complex occludes the lateral gate of the SEC61 complex to promote insertion of subsequent transmembrane regions. Within the MPT complex, the GEL subcomplex may mediate insertion of transmembrane regions into the membrane. In addition to its role in multi-pass membrane insertion, RAB5IF/OPTI also acts as an assembly factor for mitochondrial respiratory complexes. This chain is GEL complex subunit OPTI, found in Homo sapiens (Human).